A 91-amino-acid chain; its full sequence is Large ribosomal subunit protein bL31B (91 aa).

The protein belongs to the bacterial ribosomal protein bL31 family. Type B subfamily. In terms of assembly, part of the 50S ribosomal subunit.

The chain is Large ribosomal subunit protein bL31B from Neisseria gonorrhoeae (strain ATCC 700825 / FA 1090).